The following is a 4011-amino-acid chain: Hybrid PKS-NRPS synthetase mycA (4011 aa).

The Ketosynthase family 3 (KS3) domain occupies 12–451 (NEPIAIIGSA…GANAHVILEN (440 aa)). Active-site for beta-ketoacyl synthase activity residues include Cys185, His324, and His373. The acyl transferase (AT) domain stretch occupies residues 576–903 (VFTGQGAQWA…PYTGTLSRGS (328 aa)). The interval 977 to 1113 (NPLLGRRIPD…GRVIVTLAGT (137 aa)) is N-terminal hotdog fold. Residues 977 to 1290 (NPLLGRRIPD…ITPLATRTGQ (314 aa)) form the PKS/mFAS DH domain. A dehydratase (DH) domain region spans residues 978–1287 (PLLGRRIPDG…GVRITPLATR (310 aa)). The Proton acceptor; for dehydratase activity role is filled by His1009. The C-terminal hotdog fold stretch occupies residues 1135 to 1290 (TAEVREDEFY…ITPLATRTGQ (156 aa)). Residue Asp1195 is the Proton donor; for dehydratase activity of the active site. The tract at residues 1434-1626 (YYVEALGIRE…FSGIDTITPE (193 aa)) is methyltransferase (MT) domain. The ketoreductase (KR)domain stretch occupies residues 2138 to 2311 (TYVLFGLTSD…AASVLHLGAV (174 aa)). The region spanning 2429–2504 (DSFLQKLQIM…DLVAFAHEKL (76 aa)) is the Carrier 1 domain. At Ser2464 the chain carries O-(pantetheine 4'-phosphoryl)serine. Positions 2519–2607 (AAAAAAAERS…PREQDVERTA (89 aa)) are disordered. Residues 2559-2578 (PASSSTGSDHPTSVTSSGHT) are compositionally biased toward polar residues. The interval 2604–2975 (ERTAPMSLGQ…KPDSTLGSAP (372 aa)) is condensation. Positions 3009-3414 (IIQRNPDTIA…GELEILGRID (406 aa)) are adenylation. The tract at residues 3525–3544 (AKEEEEEKRPNGSSAAPLTQ) is disordered. The span at 3535–3544 (NGSSAAPLTQ) shows a compositional bias: polar residues. The Carrier 2 domain maps to 3541-3621 (PLTQQELQLR…AMAAAVHDAA (81 aa)). Ser3581 carries the post-translational modification O-(pantetheine 4'-phosphoryl)serine. The segment at 3671 to 3978 (VVILTGATGF…RTVPLGQWIE (308 aa)) is reductase-like.

It in the C-terminal section; belongs to the NRP synthetase family.

The catalysed reaction is L-leucine + 8 malonyl-CoA + 4 S-adenosyl-L-methionine + ATP + 9 NADPH + 12 H(+) = (5S)-5-(2-methylpropyl)-3-[(2E,6R,8E,10E,12E)-6,8,10,12-tetramethyltetradeca-2,8,10,12-tetraenoyl]-2,5-dihydro-1H-pyrrol-2-one + AMP + 4 S-adenosyl-L-homocysteine + 8 CO2 + diphosphate + 9 NADP(+) + 8 CoA + 7 H2O. The protein operates within mycotoxin biosynthesis. Functionally, hybrid PKS-NRPS synthetase; part of the gene cluster that mediates the biosynthesis of myceliothermophins, mycotoxins that contain a trans-fused decalin ring system connected to a conjugated 3-pyrrolin-2-one moiety and that have potential anti-tumor properties. The polyketide synthase module (PKS) of the PKS-NRPS mycA is responsible for the synthesis of the octaketide backbone. The downstream nonribosomal peptide synthetase (NRPS) module then amidates the carboxyl end of the octaketide with a leucine. A reductase-like domain (R) at the C-terminus catalyzes the reductive release of the polyketide-amino acid intermediate. Because mycA lacks a designated enoylreductase (ER) domain, the required activity is provided the enoyl reductase mycC. Following mycA-catalyzed construction and release of aminoacyl polyketide aldehyde, Knoevenagel condensation yields the expected ketone. This C18 keto acyclic precursor is the substrate of the Diels-Alderase mycB, that catalyzes the Diels-Alder cycloaddition to produce myceliothermophin E. A yet unknown oxygenase involved in the production of myceliothermophin A, via substitution with a hydroxyl group at the C21, has still to be identified. This Thermothelomyces thermophilus (strain ATCC 42464 / BCRC 31852 / DSM 1799) (Sporotrichum thermophile) protein is Hybrid PKS-NRPS synthetase mycA.